The chain runs to 333 residues: Ribosomal RNA small subunit methyltransferase H (333 aa).

Residues 39-41, Asp-57, Phe-84, Asp-101, and Gln-108 contribute to the S-adenosyl-L-methionine site; that span reads GGY.

It belongs to the methyltransferase superfamily. RsmH family.

Its subcellular location is the cytoplasm. The enzyme catalyses cytidine(1402) in 16S rRNA + S-adenosyl-L-methionine = N(4)-methylcytidine(1402) in 16S rRNA + S-adenosyl-L-homocysteine + H(+). Functionally, specifically methylates the N4 position of cytidine in position 1402 (C1402) of 16S rRNA. In Dinoroseobacter shibae (strain DSM 16493 / NCIMB 14021 / DFL 12), this protein is Ribosomal RNA small subunit methyltransferase H.